Reading from the N-terminus, the 318-residue chain is tRNA uridine(34) hydroxylase (318 aa).

Residues 123-217 (EDDDTVIIDA…YGKDPETKGQ (95 aa)) enclose the Rhodanese domain. Cysteine 177 (cysteine persulfide intermediate) is an active-site residue.

It belongs to the TrhO family.

It carries out the reaction uridine(34) in tRNA + AH2 + O2 = 5-hydroxyuridine(34) in tRNA + A + H2O. Functionally, catalyzes oxygen-dependent 5-hydroxyuridine (ho5U) modification at position 34 in tRNAs. The chain is tRNA uridine(34) hydroxylase from Staphylococcus aureus (strain Mu3 / ATCC 700698).